We begin with the raw amino-acid sequence, 410 residues long: LL-diaminopimelate aminotransferase (410 aa).

Substrate contacts are provided by Tyr-15 and Gly-42. Pyridoxal 5'-phosphate-binding positions include Tyr-72, 108–109 (AK), Tyr-132, Asn-187, Tyr-218, and 246–248 (SFS). Lys-109, Tyr-132, and Asn-187 together coordinate substrate. An N6-(pyridoxal phosphate)lysine modification is found at Lys-249. Residues Arg-257 and Asn-292 each contribute to the pyridoxal 5'-phosphate site. 2 residues coordinate substrate: Asn-292 and Arg-388.

This sequence belongs to the class-I pyridoxal-phosphate-dependent aminotransferase family. LL-diaminopimelate aminotransferase subfamily. In terms of assembly, homodimer. Pyridoxal 5'-phosphate serves as cofactor.

It carries out the reaction (2S,6S)-2,6-diaminopimelate + 2-oxoglutarate = (S)-2,3,4,5-tetrahydrodipicolinate + L-glutamate + H2O + H(+). It functions in the pathway amino-acid biosynthesis; L-lysine biosynthesis via DAP pathway; LL-2,6-diaminopimelate from (S)-tetrahydrodipicolinate (aminotransferase route): step 1/1. In terms of biological role, involved in the synthesis of meso-diaminopimelate (m-DAP or DL-DAP), required for both lysine and peptidoglycan biosynthesis. Catalyzes the direct conversion of tetrahydrodipicolinate to LL-diaminopimelate. Is also able to catalyze the reverse reaction in vitro, i.e. the transamination of LL-diaminopimelate with 2-oxoglutarate to produce 2-oxo-6-aminopimelate (in equilibrium with tetrahydrodipicolinate) and glutamate. Has maximal aminotransferase activity using 2-oxoglutarate as an amino group acceptor, and cannot use oxaloacetate instead of 2-oxoglutarate, although 2-oxoadipate can substitute with 21% relative activity. Cannot use m-DAP, lysine or ornithine as the amino-group donor, when using 2-oxoglutarate as the amino-group acceptor. The sequence is that of LL-diaminopimelate aminotransferase from Methanothermobacter thermautotrophicus (strain ATCC 29096 / DSM 1053 / JCM 10044 / NBRC 100330 / Delta H) (Methanobacterium thermoautotrophicum).